Consider the following 342-residue polypeptide: Holliday junction branch migration complex subunit RuvB (342 aa).

Positions 1–181 are large ATPase domain (RuvB-L); sequence MEERFLTPKD…FGMVLELEFY (181 aa). ATP is bound by residues Leu-20, Arg-21, Gly-62, Lys-65, Thr-66, Thr-67, 128–130, Arg-171, Tyr-181, and Arg-218; that span reads EDF. Thr-66 lines the Mg(2+) pocket. Residues 182 to 252 are small ATPAse domain (RuvB-S); it reads TPDELKQIIK…TVEDAMKIMG (71 aa). Residues 255 to 342 form a head domain (RuvB-H) region; sequence AEGLDDMDRK…IGPLWDSTGD (88 aa). DNA is bound by residues Arg-310 and Arg-315.

The protein belongs to the RuvB family. Homohexamer. Forms an RuvA(8)-RuvB(12)-Holliday junction (HJ) complex. HJ DNA is sandwiched between 2 RuvA tetramers; dsDNA enters through RuvA and exits via RuvB. An RuvB hexamer assembles on each DNA strand where it exits the tetramer. Each RuvB hexamer is contacted by two RuvA subunits (via domain III) on 2 adjacent RuvB subunits; this complex drives branch migration. In the full resolvosome a probable DNA-RuvA(4)-RuvB(12)-RuvC(2) complex forms which resolves the HJ.

The protein resides in the cytoplasm. It catalyses the reaction ATP + H2O = ADP + phosphate + H(+). The RuvA-RuvB-RuvC complex processes Holliday junction (HJ) DNA during genetic recombination and DNA repair, while the RuvA-RuvB complex plays an important role in the rescue of blocked DNA replication forks via replication fork reversal (RFR). RuvA specifically binds to HJ cruciform DNA, conferring on it an open structure. The RuvB hexamer acts as an ATP-dependent pump, pulling dsDNA into and through the RuvAB complex. RuvB forms 2 homohexamers on either side of HJ DNA bound by 1 or 2 RuvA tetramers; 4 subunits per hexamer contact DNA at a time. Coordinated motions by a converter formed by DNA-disengaged RuvB subunits stimulates ATP hydrolysis and nucleotide exchange. Immobilization of the converter enables RuvB to convert the ATP-contained energy into a lever motion, pulling 2 nucleotides of DNA out of the RuvA tetramer per ATP hydrolyzed, thus driving DNA branch migration. The RuvB motors rotate together with the DNA substrate, which together with the progressing nucleotide cycle form the mechanistic basis for DNA recombination by continuous HJ branch migration. Branch migration allows RuvC to scan DNA until it finds its consensus sequence, where it cleaves and resolves cruciform DNA. The polypeptide is Holliday junction branch migration complex subunit RuvB (Kosmotoga olearia (strain ATCC BAA-1733 / DSM 21960 / TBF 19.5.1)).